The chain runs to 61 residues: Large ribosomal subunit protein uL30 (61 aa).

Belongs to the universal ribosomal protein uL30 family. As to quaternary structure, part of the 50S ribosomal subunit.

In Acidithiobacillus ferrooxidans (strain ATCC 23270 / DSM 14882 / CIP 104768 / NCIMB 8455) (Ferrobacillus ferrooxidans (strain ATCC 23270)), this protein is Large ribosomal subunit protein uL30.